The primary structure comprises 665 residues: Transketolase (665 aa).

H26 is a substrate binding site. Residues H66 and 114–116 (GPL) each bind thiamine diphosphate. The tract at residues 94–114 (NSKTPGHPETGETPGVETTTG) is disordered. Residues 97-114 (TPGHPETGETPGVETTTG) are compositionally biased toward low complexity. A Mg(2+)-binding site is contributed by D155. Thiamine diphosphate-binding residues include G156 and N185. Residues N185 and I187 each contribute to the Mg(2+) site. Residues H261, R358, and S385 each coordinate substrate. Thiamine diphosphate is bound at residue H261. E411 serves as the catalytic Proton donor. F437 is a thiamine diphosphate binding site. Residues H461, D469, and R520 each contribute to the substrate site.

The protein belongs to the transketolase family. Homodimer. It depends on Mg(2+) as a cofactor. Ca(2+) is required as a cofactor. Requires Mn(2+) as cofactor. Co(2+) serves as cofactor. The cofactor is thiamine diphosphate.

The enzyme catalyses D-sedoheptulose 7-phosphate + D-glyceraldehyde 3-phosphate = aldehydo-D-ribose 5-phosphate + D-xylulose 5-phosphate. In terms of biological role, catalyzes the transfer of a two-carbon ketol group from a ketose donor to an aldose acceptor, via a covalent intermediate with the cofactor thiamine pyrophosphate. This Buchnera aphidicola subsp. Acyrthosiphon pisum (strain APS) (Acyrthosiphon pisum symbiotic bacterium) protein is Transketolase (tkt).